Reading from the N-terminus, the 400-residue chain is CCA-adding enzyme (400 aa).

ATP contacts are provided by Gly28 and Arg31. Gly28 and Arg31 together coordinate CTP. Positions 41 and 43 each coordinate Mg(2+). Residues Arg112, Asp155, Arg158, Arg161, and Arg164 each coordinate ATP. CTP contacts are provided by Arg112, Asp155, Arg158, Arg161, and Arg164.

This sequence belongs to the tRNA nucleotidyltransferase/poly(A) polymerase family. Bacterial CCA-adding enzyme type 3 subfamily. As to quaternary structure, homodimer. Mg(2+) serves as cofactor.

It carries out the reaction a tRNA precursor + 2 CTP + ATP = a tRNA with a 3' CCA end + 3 diphosphate. The enzyme catalyses a tRNA with a 3' CCA end + 2 CTP + ATP = a tRNA with a 3' CCACCA end + 3 diphosphate. Functionally, catalyzes the addition and repair of the essential 3'-terminal CCA sequence in tRNAs without using a nucleic acid template. Adds these three nucleotides in the order of C, C, and A to the tRNA nucleotide-73, using CTP and ATP as substrates and producing inorganic pyrophosphate. tRNA 3'-terminal CCA addition is required both for tRNA processing and repair. Also involved in tRNA surveillance by mediating tandem CCA addition to generate a CCACCA at the 3' terminus of unstable tRNAs. While stable tRNAs receive only 3'-terminal CCA, unstable tRNAs are marked with CCACCA and rapidly degraded. The chain is CCA-adding enzyme from Staphylococcus aureus (strain MRSA252).